A 919-amino-acid chain; its full sequence is Coiled-coil domain-containing protein 66 (919 aa).

4 disordered regions span residues 145–166, 456–505, 724–744, and 762–816; these read KEET…KDEN, ERDR…RERE, ERNN…LPSP, and LKSD…EPSH. The segment covering 150 to 161 has biased composition (polar residues); that stretch reads QDSLHLNNTSNQ. The stretch at 467-558 forms a coiled coil; it reads HQKAITAQVE…EQRIRELAQK (92 aa). Positions 570–919 are mediates localization to cilia, centrosomes and spindle microtubules and the interaction with PCM1, CEP290, CEP104 and CSPP1; the sequence is GGYGLDDVSG…NQEENFNSSF (350 aa).

In terms of assembly, homodimer; disulfide-linked. Interacts with CEP290. Interacts with PCM1. Interacts with ARMC9, TOGARAM1, CSPP1 and CEP104. Interacts with CDK5RAP2, CEP152, CEP192, TBG1 and PRC1. As to expression, expressed in retina and blood. Expressed in retina, mainly in photoreceptors but also in outer plexiform and ganglion cell layers (at protein level).

Its subcellular location is the cytoplasm. It is found in the cytoskeleton. The protein localises to the microtubule organizing center. The protein resides in the centrosome. It localises to the centriolar satellite. Its subcellular location is the cell projection. It is found in the cilium. The protein localises to the cilium basal body. The protein resides in the cilium axoneme. It localises to the photoreceptor inner segment. Its subcellular location is the photoreceptor outer segment. Its function is as follows. Microtubule-binding protein required for ciliogenesis. May function in ciliogenesis by mediating the transport of proteins like BBS4 to the cilium, but also through the organization of the centriolar satellites. Required for the assembly of signaling-competent cilia with proper structure and length. Mediates this function in part by regulating transition zone assembly and basal body recruitment of the IFT-B complex. Cooperates with the ciliopathy proteins CSPP1 and CEP104 during cilium length regulation. Plays two important roles during cell division. First, is required for mitotic progression via regulation of spindle assembly, organization and orientation, levels of spindle microtubules (MTs), kinetochore-fiber integrity, and chromosome alignment. Second, functions during cytokinesis in part by regulating assembly and organization of central spindle and midbody MTs. Plays a role in retina morphogenesis and/or homeostasis. This Canis lupus familiaris (Dog) protein is Coiled-coil domain-containing protein 66 (CCDC66).